The primary structure comprises 207 residues: Large ribosomal subunit protein uL4 (207 aa).

The tract at residues 49–78 (HAVKNRSAVSGGGRKPWRQKGTGRARQGSI) is disordered.

Belongs to the universal ribosomal protein uL4 family. Part of the 50S ribosomal subunit.

In terms of biological role, one of the primary rRNA binding proteins, this protein initially binds near the 5'-end of the 23S rRNA. It is important during the early stages of 50S assembly. It makes multiple contacts with different domains of the 23S rRNA in the assembled 50S subunit and ribosome. Its function is as follows. Forms part of the polypeptide exit tunnel. This Streptococcus pneumoniae serotype 2 (strain D39 / NCTC 7466) protein is Large ribosomal subunit protein uL4.